Consider the following 278-residue polypeptide: MKETFIHPTALVEPGVELGQGVSVGPFCHVQSGAIIGNDCELMSHVVITGATTLGAGTKVYPHAILGCDPQNNKHKGGPTRLNVGVNCIIREGVTMHKGSDNARGYTSIGDNCSFLAYAHVAHDCDIGDYVTFSNNVMIGGHTSIGHHAILGGGAAVHQFVRVGHHAFIGGLAAVVSDLIPYGMAIGVHAHLGGLNIIGMKRSGMERKEIHNLRHAVRMLFDRTKPIRQRAQDVLAAIPDSPTVSDMISFINVDTKRAYCTPPLDAAHGGAGHDSDED.

The protein belongs to the transferase hexapeptide repeat family. LpxA subfamily. As to quaternary structure, homotrimer.

It localises to the cytoplasm. It catalyses the reaction a (3R)-hydroxyacyl-[ACP] + UDP-N-acetyl-alpha-D-glucosamine = a UDP-3-O-[(3R)-3-hydroxyacyl]-N-acetyl-alpha-D-glucosamine + holo-[ACP]. The protein operates within glycolipid biosynthesis; lipid IV(A) biosynthesis; lipid IV(A) from (3R)-3-hydroxytetradecanoyl-[acyl-carrier-protein] and UDP-N-acetyl-alpha-D-glucosamine: step 1/6. Functionally, involved in the biosynthesis of lipid A, a phosphorylated glycolipid that anchors the lipopolysaccharide to the outer membrane of the cell. In Brucella abortus (strain S19), this protein is Acyl-[acyl-carrier-protein]--UDP-N-acetylglucosamine O-acyltransferase.